The following is a 393-amino-acid chain: L-methionine gamma-lyase (393 aa).

Pyridoxal 5'-phosphate contacts are provided by residues 63-65 (YQR) and 93-94 (GM). Tyr-119 contacts L-homocysteine. 206–208 (SAT) is a binding site for pyridoxal 5'-phosphate. Lys-209 carries the post-translational modification N6-(pyridoxal phosphate)lysine. Arg-367 is a binding site for L-homocysteine. Position 367 (Arg-367) interacts with L-methionine.

This sequence belongs to the trans-sulfuration enzymes family. L-methionine gamma-lyase subfamily. As to quaternary structure, homotetramer. Pyridoxal 5'-phosphate serves as cofactor.

It catalyses the reaction L-methionine + H2O = methanethiol + 2-oxobutanoate + NH4(+). The enzyme catalyses L-homocysteine + H2O = 2-oxobutanoate + hydrogen sulfide + NH4(+) + H(+). In terms of biological role, catalyzes the alpha,gamma-elimination of L-methionine to produce methanethiol, 2-oxobutanoate and ammonia. Is also able to catalyze the alpha,gamma-elimination of L-homocysteine. The chain is L-methionine gamma-lyase from Brevibacterium sandarakinum.